We begin with the raw amino-acid sequence, 248 residues long: Lysine-rich arabinogalactan protein 19 (248 aa).

Residues 1 to 24 form the signal peptide; it reads MESNSIIWSLLLASALISSFSVNA. The segment covering 25–37 has biased composition (low complexity); it reads QGPAASPVTSTTT. A disordered region spans residues 25-221; it reads QGPAASPVTS…APSPNTNGGN (197 aa). Composition is skewed to pro residues over residues 38–57, 67–86, and 94–171; these read APPP…PTTT, PASP…PAPK, and ATPP…PAPA. The span at 173-187 shows a compositional bias: basic residues; sequence TKHKRKHKHKRHHHA. Over residues 189–203 the composition is skewed to pro residues; that stretch reads APAPIPPSPPSPPVL. A lipid anchor (GPI-anchor amidated serine) is attached at serine 196. The propeptide at 197 to 248 is removed in mature form; sequence PPSPPVLTDPQDTAPAPSPNTNGGNALNQLKGRAVMWLNTGLVILFLLAMTA.

Belongs to the lysine-rich AGP family. Post-translationally, O-glycosylated on the hydroxyproline residues. Strongly expressed in stems, moderately expressed in flowers and roots and weakly expressed in young leaves.

It is found in the cell membrane. Its function is as follows. Proteoglycan that seems to be implicated in diverse developmental roles such as differentiation, cell-cell recognition, embryogenesis and programmed cell death. This Arabidopsis thaliana (Mouse-ear cress) protein is Lysine-rich arabinogalactan protein 19 (AGP19).